The chain runs to 152 residues: UPF0178 protein SAR0734 (152 aa).

Belongs to the UPF0178 family.

In Staphylococcus aureus (strain MRSA252), this protein is UPF0178 protein SAR0734.